A 259-amino-acid polypeptide reads, in one-letter code: PKHD-type hydroxylase PsycPRwf_1523 (259 aa).

Positions 80 to 180 constitute a Fe2OG dioxygenase domain; sequence VIMPPLFSAY…RLAMVTWVQS (101 aa). The Fe cation site is built by His98, Asp100, and His161. A 2-oxoglutarate-binding site is contributed by Arg171.

It depends on Fe(2+) as a cofactor. Requires L-ascorbate as cofactor.

In Psychrobacter sp. (strain PRwf-1), this protein is PKHD-type hydroxylase PsycPRwf_1523.